Consider the following 131-residue polypeptide: Small ribosomal subunit protein uS8 (131 aa).

Belongs to the universal ribosomal protein uS8 family. In terms of assembly, part of the 30S ribosomal subunit. Contacts proteins S5 and S12.

One of the primary rRNA binding proteins, it binds directly to 16S rRNA central domain where it helps coordinate assembly of the platform of the 30S subunit. The sequence is that of Small ribosomal subunit protein uS8 from Chlorobium limicola (strain DSM 245 / NBRC 103803 / 6330).